A 599-amino-acid polypeptide reads, in one-letter code: Pentatricopeptide repeat-containing protein At3g62470, mitochondrial (599 aa).

A mitochondrion-targeting transit peptide spans 1–99; the sequence is MAAAPWLHLS…RGFSSGSSNV (99 aa). 10 PPR repeats span residues 194-228, 230-262, 263-293, 297-331, 332-366, 367-401, 402-436, 437-471, 472-506, and 507-541; these read DSRT…GLLT, ETFT…KFKI, GVET…LKER, NMMT…GLKP, DIVA…GPCP, NVRS…GLQP, DAAV…GHPP, DGKT…EIEP, SIHT…GICP, and DDNS…GMKT.

The protein belongs to the PPR family. P subfamily.

Its subcellular location is the mitochondrion. The polypeptide is Pentatricopeptide repeat-containing protein At3g62470, mitochondrial (Arabidopsis thaliana (Mouse-ear cress)).